Here is a 445-residue protein sequence, read N- to C-terminus: MKHFEANFDGLVGPTHNYAGLSFGNVASLNNAAATSNPRAAAKQGLKKAKALADMGMVQGMLAPQERPDLHTLRRIGFSGTDAEILNKAAKEAPALLRACCSASSMWTANAATVSPSADTHDGKLHFTPANLVDKLHRSIEPETTGNILAATFNNSRHFAHHQHLPEHSSFGDEGAANHTRLCKDYGNAGVELFVYGQEATNPAAPKPSKFPARQTLEASQAIARLHQLDDENTVFISQNPDVIDQGVFHNDVIAVGNQNVLFYHEQAFLDTKRKLDEIKRKFGDSELHFIEVPTSRVAIQDAVKSYLFNTQIITLPSGEMAIIAPTNCQENEAVHAYLNEVVTLGSPIKQVNYFDVKQSMQNGGGPACLRLRVAMNDMELAAVNQHTLMNDALFTRLNAWVDKHYRDRLSVDDLADPQVLIESRTALDELTQIMKLGSVYQFQK.

Substrate contacts are provided by residues 19–28 (AGLSFGNVAS), N110, and 137–138 (HR). The active site involves E174. Substrate is bound at residue R214. The active site involves H250. Residues D252 and N363 each contribute to the substrate site. C369 functions as the Nucleophile in the catalytic mechanism.

The protein belongs to the succinylarginine dihydrolase family. As to quaternary structure, homodimer.

The catalysed reaction is N(2)-succinyl-L-arginine + 2 H2O + 2 H(+) = N(2)-succinyl-L-ornithine + 2 NH4(+) + CO2. Its pathway is amino-acid degradation; L-arginine degradation via AST pathway; L-glutamate and succinate from L-arginine: step 2/5. In terms of biological role, catalyzes the hydrolysis of N(2)-succinylarginine into N(2)-succinylornithine, ammonia and CO(2). This chain is N-succinylarginine dihydrolase, found in Shewanella sediminis (strain HAW-EB3).